The chain runs to 306 residues: MHLSAHIDPLQIILCTEIDEACIQFIKSQIEGIARACGPRMQANFEGVLIPYVDVLGKFLYRACCLRYATMGEEAARIVLAKQDRSKGLVLATTGERMTSLIFSLVIDLVGVHVNKLLKQASYSSSFKLPFGLRNLLPEAVISKEKHLVYILNSFKPILLKLVSIIRFLCLTMKGHCATVSQLLLGLKYISLDEINPEEKKKVLTLLLLLGSRLIASILQHSNSYFDQHTISSITDERDLEDKNKLPFIPEGNRKCSLCMEFIHCPAATECGHIFCWSCINGWTSKKSECPLCRAFSSPSKIILLR.

Topologically, residues 1 to 52 (MHLSAHIDPLQIILCTEIDEACIQFIKSQIEGIARACGPRMQANFEGVLIPY) are peroxisomal matrix. The helical transmembrane segment at 53 to 84 (VDVLGKFLYRACCLRYATMGEEAARIVLAKQD) threads the bilayer. The Cytoplasmic segment spans residues 85–147 (RSKGLVLATT…PEAVISKEKH (63 aa)). Residues 148 to 174 (LVYILNSFKPILLKLVSIIRFLCLTMK) form a helical membrane-spanning segment. The Peroxisomal matrix segment spans residues 175-202 (GHCATVSQLLLGLKYISLDEINPEEKKK). A helical transmembrane segment spans residues 203-219 (VLTLLLLLGSRLIASIL). Over 220–306 (QHSNSYFDQH…SSPSKIILLR (87 aa)) the chain is Cytoplasmic. Zn(2+) contacts are provided by C256, C259, C271, H273, C276, C279, C290, and C293. An RING-type zinc finger spans residues 256-294 (CSLCMEFIHCPAATECGHIFCWSCINGWTSKKSECPLCR).

Belongs to the pex2/pex10/pex12 family. As to quaternary structure, component of the PEX2-PEX10-PEX12 retrotranslocation channel, composed of PEX2, PEX10 and PEX12.

It localises to the peroxisome membrane. The enzyme catalyses S-ubiquitinyl-[E2 ubiquitin-conjugating enzyme]-L-cysteine + [acceptor protein]-L-lysine = [E2 ubiquitin-conjugating enzyme]-L-cysteine + N(6)-ubiquitinyl-[acceptor protein]-L-lysine.. It functions in the pathway protein modification; protein ubiquitination. The E3 ubiquitin-protein ligase activity is stimulated by PEX12. Its function is as follows. E3 ubiquitin-protein ligase component of a retrotranslocation channel required for peroxisome organization by mediating export of the PEX5 receptor from peroxisomes to the cytosol, thereby promoting PEX5 recycling. The retrotranslocation channel is composed of PEX2, PEX10 and PEX12; each subunit contributing transmembrane segments that coassemble into an open channel that specifically allows the passage of PEX5 through the peroxisomal membrane. PEX10 also regulates PEX5 recycling by acting as a E3 ubiquitin-protein ligase. When PEX5 recycling is compromised, PEX10 catalyzes polyubiquitination of PEX5 during its passage through the retrotranslocation channel, leading to its degradation. In Schizosaccharomyces pombe (strain 972 / ATCC 24843) (Fission yeast), this protein is Peroxisome biogenesis factor 10 (pas4).